Consider the following 858-residue polypeptide: MSSSLYHPRPVLSSQRYTPSPDYLQDARRTYHDNSRLPLRETASNAQSHNFNSMVPCYSSQVGISPSVPASLPAPMIPSQSFECLYRVPTPRNQPRFQQRRPRNEVNPLYFWPAFRQYRNRQAHKDTQKDKGGVWRRPELEDAFVDSVLLMPHMGRRKFSMGGKLHGRNMLISEYIFTICVAILGSKEIFRIDNSNDSIEQMGRKQVSSHMQVVKKFFEDLRCFHFLFPAEEKKEPGSTNSDDYYDEEEQESFKSNPVLTALAEGRVPDVKPNYEYFSQLLALQSLISVRPKTAEVYVSSSEVKFRDEIAYDAQDAPLDTESFPHLNKYNNCDDSPSVLGKDVLLHEYTRSLDRTTSACVKTVTRRWQKDAPEIYETLELPTRDEECLLLEMCATLELHEHARFPSGSELTGFVEVAITNPNLQSHRWKCVTRLTRPSELHSDDKKSSVYTNETGIHRRGCSDSKPDCDCHSRPRQDIHVPFPAVEWASILSMAVQYPDVEHQRKKEKRTKGDDRKNLDRAGSKRKRSEDDGDAASWARRDLTGSDLICKVAMYQELWSCAPDSNRWVRQGIVFWRFNTTNQWYKYNPVFKPAGTSWRWLTVNDPMSRYHQQKALVYPSASMSLDSIMSPTPSINQHMTAAMNETFSSAWDPSVSLAQVPNATATNNGLTLFESFSGGLATPPPTAGLQGSYSGSFDHGMPPSTGVGFIPSTCSTAGESHPGTGHGHSHSAAYYDAQTTLADLKPVMSTVNPYQSPTTSSGLDLSSSLVYDNAECDTGLQGWDMPALDGWSTGAGSGSEWGSHHKVEPSSDQTALWTQSQWAQMAGDRDGSPRPMKRRRGDGIDSHIPPTMTAAAGGW.

The interval Met-1–Asp-22 is disordered. The TEA DNA-binding region spans Gln-128–Leu-221. Residues Val-500 to Gly-522 are compositionally biased toward basic and acidic residues. 2 disordered regions span residues Val-500 to Ala-535 and Thr-792 to Trp-858. Positions Asp-514–Ala-521 match the Nuclear localization signal motif. The span at Ser-809–Ala-822 shows a compositional bias: polar residues.

The protein belongs to the TEC1 family.

It localises to the nucleus. Functionally, abaA and wetA are pivotal regulators of conidiophore development and conidium maturation. They act individually and together to regulate their own expression and that of numerous other sporulation-specific genes. Binds to the sequence 5'-CATTCY-3', where Y is a pyrimidine, making both major- and minor-groove contacts. Plays a pivotal role in conidiation by regulating cell cycle pathways and other conidiation-related genes. This Gibberella zeae (strain ATCC MYA-4620 / CBS 123657 / FGSC 9075 / NRRL 31084 / PH-1) (Wheat head blight fungus) protein is Conidiophore development regulator abaA.